The chain runs to 265 residues: Glutamate racemase (265 aa).

Substrate-binding positions include 9 to 10 and 41 to 42; these read DS and YS. Catalysis depends on cysteine 73, which acts as the Proton donor/acceptor. Residue 74–75 participates in substrate binding; it reads NT. Catalysis depends on cysteine 184, which acts as the Proton donor/acceptor. 185–186 lines the substrate pocket; sequence TH.

Belongs to the aspartate/glutamate racemases family.

It catalyses the reaction L-glutamate = D-glutamate. The protein operates within cell wall biogenesis; peptidoglycan biosynthesis. Its function is as follows. Provides the (R)-glutamate required for cell wall biosynthesis. In Haemophilus ducreyi (strain 35000HP / ATCC 700724), this protein is Glutamate racemase.